A 255-amino-acid polypeptide reads, in one-letter code: Taurine import ATP-binding protein TauB (255 aa).

The 228-residue stretch at 2 to 229 (LQISHLYADY…RFVAGESSRS (228 aa)) folds into the ABC transporter domain. Residue 34-41 (GPSGCGKT) coordinates ATP.

Belongs to the ABC transporter superfamily. Taurine importer (TC 3.A.1.17.1) family. In terms of assembly, the complex is composed of two ATP-binding proteins (TauB), two transmembrane proteins (TauC) and a solute-binding protein (TauA).

It localises to the cell inner membrane. It catalyses the reaction taurine(out) + ATP + H2O = taurine(in) + ADP + phosphate + H(+). Functionally, part of the ABC transporter complex TauABC involved in taurine import. Responsible for energy coupling to the transport system. The protein is Taurine import ATP-binding protein TauB of Escherichia coli O157:H7.